The chain runs to 229 residues: Large ribosomal subunit protein uL1 (229 aa).

The protein belongs to the universal ribosomal protein uL1 family. Part of the 50S ribosomal subunit.

Functionally, binds directly to 23S rRNA. The L1 stalk is quite mobile in the ribosome, and is involved in E site tRNA release. Its function is as follows. Protein L1 is also a translational repressor protein, it controls the translation of the L11 operon by binding to its mRNA. This is Large ribosomal subunit protein uL1 from Rhodopseudomonas palustris (strain TIE-1).